Here is a 466-residue protein sequence, read N- to C-terminus: ATP synthase subunit beta (466 aa).

155 to 162 (GGAGVGKT) lines the ATP pocket.

This sequence belongs to the ATPase alpha/beta chains family. F-type ATPases have 2 components, CF(1) - the catalytic core - and CF(0) - the membrane proton channel. CF(1) has five subunits: alpha(3), beta(3), gamma(1), delta(1), epsilon(1). CF(0) has three main subunits: a(1), b(2) and c(9-12). The alpha and beta chains form an alternating ring which encloses part of the gamma chain. CF(1) is attached to CF(0) by a central stalk formed by the gamma and epsilon chains, while a peripheral stalk is formed by the delta and b chains.

The protein resides in the cell inner membrane. The enzyme catalyses ATP + H2O + 4 H(+)(in) = ADP + phosphate + 5 H(+)(out). Its function is as follows. Produces ATP from ADP in the presence of a proton gradient across the membrane. The catalytic sites are hosted primarily by the beta subunits. This is ATP synthase subunit beta from Bordetella pertussis (strain Tohama I / ATCC BAA-589 / NCTC 13251).